The primary structure comprises 40 residues: Serine proteinase-like BMK-CBP (40 aa).

Positions 1–40 (IFGGTFAKNGEYPWMVVIDLPEFACGGVLISKKFVLTAAH) constitute a Peptidase S1 domain. The Charge relay system role is filled by His40.

It belongs to the peptidase S1 family. In terms of tissue distribution, expressed by the venom gland.

The protein localises to the secreted. Its function is as follows. Binds in a dose-dependent manner to the breast cancer cell line MCF-7. This chain is Serine proteinase-like BMK-CBP, found in Olivierus martensii (Manchurian scorpion).